The following is a 301-amino-acid chain: MQAGGIPGFALTFAAPAKINLALHVVGQRADGHHLLESLVTFAECGDRVGLIAADRDRFTVSGRFATDLSAEGNGGNLVLRARDLLRRELAAQGRMAGPVHLHLEKNLPIASGIGGGSADAAATLRGLLSLWGATVEAASLNSLALQLGADVPMCLDRGPLVARGIGEEITPLPDLPPFDVVLVNPLVAVSTPVIFRSLVRKTNPPLVLPEDARSTAEWLTAMAAMRNDLEPPARAHEPMIETVSNALRDAGAALVRMSGSGATCFGLFTGMKSAERAAETISAGHPRWYVQATRTAGKSG.

K18 is an active-site residue. Residue 109-119 (PIASGIGGGSA) participates in ATP binding. D151 is an active-site residue.

It belongs to the GHMP kinase family. IspE subfamily.

It carries out the reaction 4-CDP-2-C-methyl-D-erythritol + ATP = 4-CDP-2-C-methyl-D-erythritol 2-phosphate + ADP + H(+). The protein operates within isoprenoid biosynthesis; isopentenyl diphosphate biosynthesis via DXP pathway; isopentenyl diphosphate from 1-deoxy-D-xylulose 5-phosphate: step 3/6. In terms of biological role, catalyzes the phosphorylation of the position 2 hydroxy group of 4-diphosphocytidyl-2C-methyl-D-erythritol. This Rhizobium meliloti (strain 1021) (Ensifer meliloti) protein is 4-diphosphocytidyl-2-C-methyl-D-erythritol kinase.